The primary structure comprises 387 residues: Cobalt-precorrin-5B C(1)-methyltransferase (387 aa).

The protein belongs to the CbiD family.

It catalyses the reaction Co-precorrin-5B + S-adenosyl-L-methionine = Co-precorrin-6A + S-adenosyl-L-homocysteine. It functions in the pathway cofactor biosynthesis; adenosylcobalamin biosynthesis; cob(II)yrinate a,c-diamide from sirohydrochlorin (anaerobic route): step 6/10. Catalyzes the methylation of C-1 in cobalt-precorrin-5B to form cobalt-precorrin-6A. In Desulfitobacterium hafniense (strain Y51), this protein is Cobalt-precorrin-5B C(1)-methyltransferase.